A 641-amino-acid chain; its full sequence is 1-deoxy-D-xylulose-5-phosphate synthase (641 aa).

Thiamine diphosphate is bound by residues H79 and 120–122 (AHS). D151 contacts Mg(2+). Residues 152–153 (GA), N180, Y290, and E372 contribute to the thiamine diphosphate site. Residue N180 participates in Mg(2+) binding.

The protein belongs to the transketolase family. DXPS subfamily. Homodimer. Mg(2+) is required as a cofactor. The cofactor is thiamine diphosphate.

The catalysed reaction is D-glyceraldehyde 3-phosphate + pyruvate + H(+) = 1-deoxy-D-xylulose 5-phosphate + CO2. It functions in the pathway metabolic intermediate biosynthesis; 1-deoxy-D-xylulose 5-phosphate biosynthesis; 1-deoxy-D-xylulose 5-phosphate from D-glyceraldehyde 3-phosphate and pyruvate: step 1/1. Functionally, catalyzes the acyloin condensation reaction between C atoms 2 and 3 of pyruvate and glyceraldehyde 3-phosphate to yield 1-deoxy-D-xylulose-5-phosphate (DXP). This chain is 1-deoxy-D-xylulose-5-phosphate synthase, found in Bradyrhizobium sp. (strain ORS 278).